The following is a 278-amino-acid chain: Large ribosomal subunit protein uL2 (278 aa).

Positions Gly223–Lys278 are disordered.

It belongs to the universal ribosomal protein uL2 family. As to quaternary structure, part of the 50S ribosomal subunit. Forms a bridge to the 30S subunit in the 70S ribosome.

In terms of biological role, one of the primary rRNA binding proteins. Required for association of the 30S and 50S subunits to form the 70S ribosome, for tRNA binding and peptide bond formation. It has been suggested to have peptidyltransferase activity; this is somewhat controversial. Makes several contacts with the 16S rRNA in the 70S ribosome. The protein is Large ribosomal subunit protein uL2 of Methylobacterium nodulans (strain LMG 21967 / CNCM I-2342 / ORS 2060).